A 259-amino-acid chain; its full sequence is Phosphatidylserine decarboxylase proenzyme (259 aa).

Residues aspartate 86, histidine 142, and serine 226 each act as charge relay system; for autoendoproteolytic cleavage activity in the active site. Residue serine 226 is the Schiff-base intermediate with substrate; via pyruvic acid; for decarboxylase activity of the active site. Pyruvic acid (Ser); by autocatalysis is present on serine 226.

The protein belongs to the phosphatidylserine decarboxylase family. PSD-B subfamily. Prokaryotic type I sub-subfamily. As to quaternary structure, heterodimer of a large membrane-associated beta subunit and a small pyruvoyl-containing alpha subunit. Pyruvate is required as a cofactor. Is synthesized initially as an inactive proenzyme. Formation of the active enzyme involves a self-maturation process in which the active site pyruvoyl group is generated from an internal serine residue via an autocatalytic post-translational modification. Two non-identical subunits are generated from the proenzyme in this reaction, and the pyruvate is formed at the N-terminus of the alpha chain, which is derived from the carboxyl end of the proenzyme. The autoendoproteolytic cleavage occurs by a canonical serine protease mechanism, in which the side chain hydroxyl group of the serine supplies its oxygen atom to form the C-terminus of the beta chain, while the remainder of the serine residue undergoes an oxidative deamination to produce ammonia and the pyruvoyl prosthetic group on the alpha chain. During this reaction, the Ser that is part of the protease active site of the proenzyme becomes the pyruvoyl prosthetic group, which constitutes an essential element of the active site of the mature decarboxylase.

It localises to the cell membrane. It catalyses the reaction a 1,2-diacyl-sn-glycero-3-phospho-L-serine + H(+) = a 1,2-diacyl-sn-glycero-3-phosphoethanolamine + CO2. The protein operates within phospholipid metabolism; phosphatidylethanolamine biosynthesis; phosphatidylethanolamine from CDP-diacylglycerol: step 2/2. Catalyzes the formation of phosphatidylethanolamine (PtdEtn) from phosphatidylserine (PtdSer). The protein is Phosphatidylserine decarboxylase proenzyme of Halalkalibacterium halodurans (strain ATCC BAA-125 / DSM 18197 / FERM 7344 / JCM 9153 / C-125) (Bacillus halodurans).